We begin with the raw amino-acid sequence, 508 residues long: Potassium/proton antiporter CemA (508 aa).

Transmembrane regions (helical) follow at residues 66-86 (LFII…LNLL), 282-302 (YQAL…WIIS), 386-406 (ILHL…FILG), 433-453 (ILLL…EVVI), and 468-488 (IISC…KYWI).

Belongs to the CemA family.

The protein resides in the plastid. The protein localises to the chloroplast inner membrane. It carries out the reaction K(+)(in) + H(+)(out) = K(+)(out) + H(+)(in). Contributes to K(+)/H(+) antiport activity by supporting proton efflux to control proton extrusion and homeostasis in chloroplasts in a light-dependent manner to modulate photosynthesis. Prevents excessive induction of non-photochemical quenching (NPQ) under continuous-light conditions. Indirectly promotes efficient inorganic carbon uptake into chloroplasts. The sequence is that of Potassium/proton antiporter CemA from Anthoceros angustus (Hornwort).